Consider the following 213-residue polypeptide: MSAEILNPNLRRVVLASNNAGKLREFSALFAPLGIELVPQSELGVSEAEEPHATFVENALAKARHASRHTGLPALADDSGLCVVALGGAPGVHSARYAQQPGGARSDAANNALLVRELAAAGDRRAWYVALLALVRTENDPCPLIGEGLWHGEIVDAPAGEHGFGYDPHFYLPQQGCTAAQLAPEHKNRISHRAQALAQLLDKLRATGPVDRP.

17–22 serves as a coordination point for substrate; it reads SNNAGK. The Mg(2+) site is built by Glu49 and Asp78. Asp78 functions as the Proton acceptor in the catalytic mechanism. Substrate contacts are provided by residues Ser79, 164–167, Lys187, and 192–193; these read FGYD and HR.

Belongs to the HAM1 NTPase family. Homodimer. Mg(2+) is required as a cofactor.

The catalysed reaction is XTP + H2O = XMP + diphosphate + H(+). It catalyses the reaction dITP + H2O = dIMP + diphosphate + H(+). It carries out the reaction ITP + H2O = IMP + diphosphate + H(+). In terms of biological role, pyrophosphatase that catalyzes the hydrolysis of nucleoside triphosphates to their monophosphate derivatives, with a high preference for the non-canonical purine nucleotides XTP (xanthosine triphosphate), dITP (deoxyinosine triphosphate) and ITP. Seems to function as a house-cleaning enzyme that removes non-canonical purine nucleotides from the nucleotide pool, thus preventing their incorporation into DNA/RNA and avoiding chromosomal lesions. The sequence is that of dITP/XTP pyrophosphatase from Bordetella bronchiseptica (strain ATCC BAA-588 / NCTC 13252 / RB50) (Alcaligenes bronchisepticus).